Consider the following 287-residue polypeptide: uncharacterized protein (287 aa).

This sequence belongs to the A.longa ORF167/ORF288 family.

It is found in the plastid. This is an uncharacterized protein from Euglena longa (Euglenophycean alga).